A 301-amino-acid chain; its full sequence is GTPase Era (301 aa).

An Era-type G domain is found at 7-175 (YCGFIAIVGR…AAIVRKHLPE (169 aa)). The tract at residues 15–22 (GRPNVGKS) is G1. 15 to 22 (GRPNVGKS) serves as a coordination point for GTP. The interval 41–45 (QTTRH) is G2. A G3 region spans residues 62 to 65 (DTPG). Residues 62–66 (DTPGL) and 124–127 (NKVD) each bind GTP. The G4 stretch occupies residues 124-127 (NKVD). The segment at 154–156 (ISA) is G5. The region spanning 206–283 (LGAELPYSVT…HLELWVKVKS (78 aa)) is the KH type-2 domain.

This sequence belongs to the TRAFAC class TrmE-Era-EngA-EngB-Septin-like GTPase superfamily. Era GTPase family. Monomer.

The protein resides in the cytoplasm. Its subcellular location is the cell inner membrane. In terms of biological role, an essential GTPase that binds both GDP and GTP, with rapid nucleotide exchange. Plays a role in 16S rRNA processing and 30S ribosomal subunit biogenesis and possibly also in cell cycle regulation and energy metabolism. This Escherichia coli O1:K1 / APEC protein is GTPase Era.